We begin with the raw amino-acid sequence, 213 residues long: Ergothioneine transport ATP-binding protein EgtV (213 aa).

Positions 5–212 (VTIENVSFNY…ATKTLEIKAL (208 aa)) constitute an ABC transporter domain. An ATP-binding site is contributed by 37 to 44 (GESGSGKS).

It belongs to the ABC transporter superfamily. As to quaternary structure, the complex is composed of two ATP-binding proteins (EgtV) and two transmembrane proteins (EgtU).

The protein resides in the cell inner membrane. It carries out the reaction ergothioneine(out) + ATP + H2O = ergothioneine(in) + ADP + phosphate + H(+). In terms of biological role, part of the ABC transporter complex EgtUV involved in the uptake of ergothioneine (EGT), a natural low-molecular weight (LMW) thiol antioxidant which protects H.pylori against bleach stress. Responsible for energy coupling to the transport system. In Helicobacter pylori (strain G27), this protein is Ergothioneine transport ATP-binding protein EgtV.